The following is a 196-amino-acid chain: Imidazoleglycerol-phosphate dehydratase (196 aa).

The protein belongs to the imidazoleglycerol-phosphate dehydratase family.

It is found in the cytoplasm. It catalyses the reaction D-erythro-1-(imidazol-4-yl)glycerol 3-phosphate = 3-(imidazol-4-yl)-2-oxopropyl phosphate + H2O. The protein operates within amino-acid biosynthesis; L-histidine biosynthesis; L-histidine from 5-phospho-alpha-D-ribose 1-diphosphate: step 6/9. In Ralstonia pickettii (strain 12J), this protein is Imidazoleglycerol-phosphate dehydratase.